Here is a 630-residue protein sequence, read N- to C-terminus: Internalin B (630 aa).

The signal sequence occupies residues 1–30; the sequence is MKEKHNPRRKYCLISGLAIIFSLWIIIGNG. In terms of domain architecture, LRRNT spans 31-76; the sequence is AKVQAETITVPTPIKQIFSDDAFAETIKDNLKKKSVTDAVTQNELN. LRR repeat units lie at residues 75–97, 98–121, 123–141, 142–163, 164–187, 189–207, and 208–231; these read LNSI…IQYL, PNVT…NLKN, GWLF…LKDL, KKLK…LVHL, PQLE…RLTK, DTLS…LAGL, and TKLQ…GLKN. Residues 241 to 319 form an ig-like region region; the sequence is ECLNKPINHQ…RFHGRVTQPL (79 aa). An LRRCT domain is found at 241 to 330; sequence ECLNKPINHQ…EVYTVSYDVD (90 aa). The segment at 320–392 is b repeat region; it reads KEVYTVSYDV…TLYAVFKAET (73 aa). 3 GW domains span residues 393 to 467, 472 to 550, and 553 to 630; these read TEKA…LDRY, YDKG…TFYK, and MEKP…RAQK. Residues 399–630 form a GW repeat region, necessary and sufficient for cell surface attachment, interacts with host C1QBP and with heparin region; it reads LTRYVKYIRG…TKAANLRAQK (232 aa).

This sequence belongs to the internalin family. Interacts via its LRR repeats plus the Ig-like region with the extracellular portion (residues 25-741) of its receptor MET; MET can bind HGF, its endogenous ligand, and InlB simultaneously. Probably forms a dimer upon interaction with host MET, which subsequently allows dimerization of the host MET and subsequent host signaling; dimerization probably occurs via the convex surface of InlB. Prevention of dimerization does not block interaction with MET but prevents downstream action.

It localises to the secreted. The protein localises to the cytoplasm. It is found in the cell membrane. Its function is as follows. Mediates the entry of L.monocytogenes into normally non-phagocytic mammalian host cells. Its host receptor is hepatocyte growth factor receptor (HGF receptor, a tyrosine kinase, MET) which is tyrosine-phosphorylated in response to InlB. Downstream targets MAPK1/MAPK3 (Erk1/2) and AKT are phosphorylated in response to InlB, which also causes cell colony scattering. Complement component 1 Q subcomponent-binding protein (gC1q-R, C1QBP) has been suggested to also act an InlB receptor, but this is less certain. Stimulation of Tyr-phosphorylation of MET by InlB is potentiated by the InlB GW domains and glycosaminoglycans such as heparin. The chain is Internalin B (inlB) from Listeria monocytogenes serovar 1/2a (strain ATCC BAA-679 / EGD-e).